We begin with the raw amino-acid sequence, 159 residues long: Bacterial non-heme ferritin (159 aa).

Residues 1-145 (MISEKLQNAI…GIVDKIKRAG (145 aa)) form the Ferritin-like diiron domain. 5 residues coordinate Fe cation: Glu17, Glu50, His53, Glu94, and Gln127.

Belongs to the ferritin family. Prokaryotic subfamily. In terms of assembly, homooligomer of 24 subunits that assemble into a spherical protein shell (12 +/- 1 nM diameter) that can sequester at least 2000 iron atoms.

The enzyme catalyses 4 Fe(2+) + O2 + 6 H2O = 4 iron(III) oxide-hydroxide + 12 H(+). Functionally, may alleviate iron toxicity in the presence of oxygen. The chain is Bacterial non-heme ferritin (ftnA) from Bacteroides fragilis (strain 638R).